A 340-amino-acid polypeptide reads, in one-letter code: DNA-directed RNA polymerase subunit alpha (340 aa).

The interval 1–236 (MLSLSKNWNT…EQLQLFIAFE (236 aa)) is alpha N-terminal domain (alpha-NTD). The interval 251–340 (FSPYLLKRVD…LSKRYEDSYN (90 aa)) is alpha C-terminal domain (alpha-CTD).

Belongs to the RNA polymerase alpha chain family. Homodimer. The RNAP catalytic core consists of 2 alpha, 1 beta, 1 beta' and 1 omega subunit. When a sigma factor is associated with the core the holoenzyme is formed, which can initiate transcription.

The enzyme catalyses RNA(n) + a ribonucleoside 5'-triphosphate = RNA(n+1) + diphosphate. DNA-dependent RNA polymerase catalyzes the transcription of DNA into RNA using the four ribonucleoside triphosphates as substrates. This Rickettsia prowazekii (strain Madrid E) protein is DNA-directed RNA polymerase subunit alpha.